Consider the following 126-residue polypeptide: Large ribosomal subunit protein bL17 (126 aa).

This sequence belongs to the bacterial ribosomal protein bL17 family. Part of the 50S ribosomal subunit. Contacts protein L32.

This Magnetococcus marinus (strain ATCC BAA-1437 / JCM 17883 / MC-1) protein is Large ribosomal subunit protein bL17.